Consider the following 91-residue polypeptide: RNA-binding protein Hfq (91 aa).

Positions 9–68 constitute a Sm domain; the sequence is DPYLNALRRERIPVSIYLVNGIKLQGQIESFDQFVILLKNTVNQMVYKHAISTVVPARSV. Positions 68–91 are disordered; the sequence is VSHHNNNHHTTPTEAVENVETQAE.

Belongs to the Hfq family. In terms of assembly, homohexamer.

In terms of biological role, RNA chaperone that binds small regulatory RNA (sRNAs) and mRNAs to facilitate mRNA translational regulation in response to envelope stress, environmental stress and changes in metabolite concentrations. Also binds with high specificity to tRNAs. The protein is RNA-binding protein Hfq of Haemophilus influenzae (strain 86-028NP).